A 201-amino-acid polypeptide reads, in one-letter code: Holliday junction branch migration complex subunit RuvA (201 aa).

The interval 1–64 is domain I; that stretch reads MIGRLRGTLA…EDAQLLYGFA (64 aa). Positions 65 to 143 are domain II; the sequence is EKRERELFRE…AWESMPAIAT (79 aa). The flexible linker stretch occupies residues 144 to 152; that stretch reads LVVEPGSKT. Residues 153–201 form a domain III region; it reads AVTSAENDAVSALISLGFKPQEASRAVSAIQEENLSSEEMIRRALKGMV.

Belongs to the RuvA family. In terms of assembly, homotetramer. Forms an RuvA(8)-RuvB(12)-Holliday junction (HJ) complex. HJ DNA is sandwiched between 2 RuvA tetramers; dsDNA enters through RuvA and exits via RuvB. An RuvB hexamer assembles on each DNA strand where it exits the tetramer. Each RuvB hexamer is contacted by two RuvA subunits (via domain III) on 2 adjacent RuvB subunits; this complex drives branch migration. In the full resolvosome a probable DNA-RuvA(4)-RuvB(12)-RuvC(2) complex forms which resolves the HJ.

The protein resides in the cytoplasm. Its function is as follows. The RuvA-RuvB-RuvC complex processes Holliday junction (HJ) DNA during genetic recombination and DNA repair, while the RuvA-RuvB complex plays an important role in the rescue of blocked DNA replication forks via replication fork reversal (RFR). RuvA specifically binds to HJ cruciform DNA, conferring on it an open structure. The RuvB hexamer acts as an ATP-dependent pump, pulling dsDNA into and through the RuvAB complex. HJ branch migration allows RuvC to scan DNA until it finds its consensus sequence, where it cleaves and resolves the cruciform DNA. The protein is Holliday junction branch migration complex subunit RuvA of Stutzerimonas stutzeri (strain A1501) (Pseudomonas stutzeri).